Reading from the N-terminus, the 117-residue chain is Large ribosomal subunit protein bL20c (117 aa).

It belongs to the bacterial ribosomal protein bL20 family.

The protein resides in the plastid. The protein localises to the chloroplast. Functionally, binds directly to 23S ribosomal RNA and is necessary for the in vitro assembly process of the 50S ribosomal subunit. It is not involved in the protein synthesizing functions of that subunit. This is Large ribosomal subunit protein bL20c from Acorus calamus (Sweet flag).